Consider the following 664-residue polypeptide: MGRANGKRRNHRKNRMNPIQKKGFLEQEIPLNNSEAALPLLSRLDNPEIKERSWACSAISNIIASCTEGRLYLLKNGLVSKLIDRISDDSVEVVVEATGALRNLAIEEGYSICMDMYRKNVLAPLQIWQTKIVQTLDEATEGKNVLETYEDRSTFSCLCAIAENISSLLVNLGETTSQVIKVLNQKNTLVFLSRLLIPEAKIPQSVQEMALQAFFTLTDDNDDGIITWIQNSSDFALKTINQIYLYFSYPSCLVRVYSIGIIYNIYQSGFVNKKMESVVKGISLFDSFIPEALPILSDLLPSEENYRNLVRQVYDKDTYFKTKKDDLTLSSELLVIPATLELISSMTSLLQSLADGTDELEEQEDSLMEDEDLSYMDDMSNVVNEDENLIIDEIPSNTPQKGNFKLVEYMLDHVLPKVITYCVVAFEFSSEEIPSNLSNYFQEVGDRTIECLNNISWSCNSVFVESSEAFTRWKLSAGKILQWIFQTIFLRLGLGVWPFSSEGFTTACSLLWSVSKPFPAEIQVLSVDDISTLILFSSTHGSLEAQSRLLGAFGSLGRCGNIQINQLLGQTLMSCVIASDPNPLLAVEALNAIFDVYGDKSYPYDAPVFKGSGYLSQLSEALPRLKNMVKKIDRRREKHLRFRAEEALENLESFIDYKHAEYAS.

The ARM repeat unit spans residues 77 to 119 (GLVSKLIDRISDDSVEVVVEATGALRNLAIEEGYSICMDMYRK).

It belongs to the nuclear import and ribosome assembly adapter family. In terms of assembly, forms a heterotrimeric complex with rpl5 and rpl11a or rpl11b; interaction of this complex with kap104 allows the nuclear import of the heterotrimer. Component of a hexameric 5S RNP precursor complex; this complex acts as a precursor for ribosome assembly.

The protein localises to the cytoplasm. Its subcellular location is the nucleus. Nuclear import adapter that specifically recruits the two functionally and topologically linked ribosomal proteins rpl5 and rpl11 (encoded by rpl11a and rpl11b). Guarantees that this cargo pair remains bound together from the time of synthesis in the cytoplasm until delivery to the nascent 5S rRNA in the nucleus. The sequence is that of Armadillo repeat protein involved in nucleocytoplasmic transport Syo2 from Schizosaccharomyces pombe (strain 972 / ATCC 24843) (Fission yeast).